We begin with the raw amino-acid sequence, 389 residues long: MFFKIFVENTVILPNPLILTKIEGLLMIEYLLKNREQIIKKMEKINDINRKEVEEKWILDNFENPKDMGFAGGDGSCNKLDYISFSFYGVGAVSFIHGRGEKVKKAKEEYIFDITHPLDIEDRIRRYMLTLELKTALYVLKNYNIDYYIFDGSLFSLLIFTKKGIEMYERELEEIYNEYGKEFNKKIDEETKSGEIGIISKDLNLELNKKILVEHVEYILTLTKLINEFKDRIIGISKTSKINIYFDKNMPDIAIFTKYTDKSGYSEPIDFVNKLGDEKKEKHKQLSSVVKGINFIKNKPFYAKIDTAYIQFVRLEDNCGVVGLTSFNKIDKEVLSSLKEISINGYPYILKKSHETVEITTKKLEAIAKLLNIDDPIARHILGKKKKKF.

Residues D74 and D151 each contribute to the Mn(2+) site.

Belongs to the NurA family. Mn(2+) is required as a cofactor.

Involved in DNA double-strand break (DSB) repair. Probably acts with HerA to stimulate resection of the 5' strand and produce the long 3' single-strand that is required for RadA loading. The sequence is that of Probable DNA double-strand break repair nuclease NurA from Methanocaldococcus jannaschii (strain ATCC 43067 / DSM 2661 / JAL-1 / JCM 10045 / NBRC 100440) (Methanococcus jannaschii).